A 348-amino-acid chain; its full sequence is Small ribosomal subunit biogenesis GTPase RsgA (348 aa).

The CP-type G domain maps to 72–230; that stretch reads RNQLSRPAIA…IADTPGFNQP (159 aa). GTP contacts are provided by residues 121–124 and 172–180; these read TKAD and GPSGVGKSS. C255, C260, H262, and C268 together coordinate Zn(2+). The segment covering 305–322 has biased composition (basic and acidic residues); that stretch reads AKSDRQGQQRLEPLLDAK. A disordered region spans residues 305–348; sequence AKSDRQGQQRLEPLLDAKKYRRRSRRQQHQHVNPMAEEVLDSEW. The span at 323 to 333 shows a compositional bias: basic residues; it reads KYRRRSRRQQH.

This sequence belongs to the TRAFAC class YlqF/YawG GTPase family. RsgA subfamily. Monomer. Associates with 30S ribosomal subunit, binds 16S rRNA. Requires Zn(2+) as cofactor.

The protein localises to the cytoplasm. One of several proteins that assist in the late maturation steps of the functional core of the 30S ribosomal subunit. Helps release RbfA from mature subunits. May play a role in the assembly of ribosomal proteins into the subunit. Circularly permuted GTPase that catalyzes slow GTP hydrolysis, GTPase activity is stimulated by the 30S ribosomal subunit. The sequence is that of Small ribosomal subunit biogenesis GTPase RsgA from Thermosynechococcus vestitus (strain NIES-2133 / IAM M-273 / BP-1).